We begin with the raw amino-acid sequence, 928 residues long: DNA mismatch repair protein MutS (928 aa).

ATP is bound at residue 613–620 (GPNMAGKS). Residues 854–872 (KAKSNKDDHRIDEKTENSS) show a composition bias toward basic and acidic residues. The tract at residues 854–880 (KAKSNKDDHRIDEKTENSSKKHKNKDS) is disordered.

Belongs to the DNA mismatch repair MutS family.

Functionally, this protein is involved in the repair of mismatches in DNA. It is possible that it carries out the mismatch recognition step. This protein has a weak ATPase activity. This chain is DNA mismatch repair protein MutS, found in Clostridium beijerinckii (strain ATCC 51743 / NCIMB 8052) (Clostridium acetobutylicum).